The chain runs to 131 residues: CLAVATA3/ESR (CLE)-related protein ESR1 (131 aa).

A signal peptide spans 1–26; that stretch reads MASRMGMVAIVSLFVCALAASTSVNA. The disordered stretch occupies residues 49–131; sequence RQQQQGGFIG…IGPPPLSDRY (83 aa). A hydroxyproline mark is found at P81 and P84. The O-linked (Ara...) hydroxyproline glycan is linked to P84.

It belongs to the CLV3/ESR signal peptide family. The O-glycosylation (arabinosylation) of the hydroxyproline Pro-84 enhances binding affinity of the ESR1p peptide for its receptor. Seed endosperm.

Its subcellular location is the secreted. The protein localises to the extracellular space. In terms of biological role, extracellular signal peptide that regulates cell fate. This Zea mays (Maize) protein is CLAVATA3/ESR (CLE)-related protein ESR1.